We begin with the raw amino-acid sequence, 166 residues long: Small ribosomal subunit protein uS9 (166 aa).

Residues Lys-135 to Arg-166 form a disordered region. Residues Arg-142–Lys-151 show a composition bias toward basic and acidic residues. The span at Tyr-152 to Arg-166 shows a compositional bias: basic residues.

It belongs to the universal ribosomal protein uS9 family.

This is Small ribosomal subunit protein uS9 from Mycolicibacterium paratuberculosis (strain ATCC BAA-968 / K-10) (Mycobacterium paratuberculosis).